A 121-amino-acid chain; its full sequence is Large ribosomal subunit protein uL22 (121 aa).

The protein belongs to the universal ribosomal protein uL22 family. As to quaternary structure, part of the 50S ribosomal subunit.

This protein binds specifically to 23S rRNA; its binding is stimulated by other ribosomal proteins, e.g. L4, L17, and L20. It is important during the early stages of 50S assembly. It makes multiple contacts with different domains of the 23S rRNA in the assembled 50S subunit and ribosome. Functionally, the globular domain of the protein is located near the polypeptide exit tunnel on the outside of the subunit, while an extended beta-hairpin is found that lines the wall of the exit tunnel in the center of the 70S ribosome. The sequence is that of Large ribosomal subunit protein uL22 from Beutenbergia cavernae (strain ATCC BAA-8 / DSM 12333 / CCUG 43141 / JCM 11478 / NBRC 16432 / NCIMB 13614 / HKI 0122).